The following is a 41-amino-acid chain: Diuretic hormone 1 (41 aa).

At Ile41 the chain carries Isoleucine amide.

It localises to the secreted. Its function is as follows. Regulation of fluid secretion. May stimulate primary urine secretion by Malpighian tubules and causes a dose-dependent stimulation of cAMP levels in the tubules. This is Diuretic hormone 1 from Hyles lineata (White-lined sphinx moth).